Here is a 502-residue protein sequence, read N- to C-terminus: Maturase K (502 aa).

The protein belongs to the intron maturase 2 family. MatK subfamily.

It is found in the plastid. It localises to the chloroplast. Usually encoded in the trnK tRNA gene intron. Probably assists in splicing its own and other chloroplast group II introns. This is Maturase K from Stanleya pinnata (Prince's plume).